An 87-amino-acid chain; its full sequence is Small ribosomal subunit protein bS20 (87 aa).

The disordered stretch occupies residues 1-26 (MANIKSAKKRAVQSEKRRKHNASRRS).

It belongs to the bacterial ribosomal protein bS20 family.

Its function is as follows. Binds directly to 16S ribosomal RNA. This is Small ribosomal subunit protein bS20 from Yersinia enterocolitica serotype O:8 / biotype 1B (strain NCTC 13174 / 8081).